A 275-amino-acid chain; its full sequence is Lectin (275 aa).

The N-terminal stretch at 1–30 (MASLQTQMISFYLIFLSILLTTIFFFKVNS) is a signal peptide. Positions 111 and 129 each coordinate D-glucose. Residues Glu149 and Asp151 each coordinate Mn(2+). Ca(2+) is bound by residues Asp151, Phe153, Asn155, and Asp159. Mn(2+)-binding residues include Asp159 and His166. The propeptide occupies 211 to 217 (NSLEEEN). Gly246 and Ala247 together coordinate D-glucose. Positions 270–275 (KQAADA) are excised as a propeptide.

It belongs to the leguminous lectin family. As to quaternary structure, heterotetramer of two alpha and two beta chains. The mature form consists of two chains, alpha and beta, produced by cleavage of the immature protein. These remain cleaved, yet fold together to form one subunit.

D-mannose specific lectin. The protein is Lectin of Lens culinaris subsp. orientalis (Oriental wild lentil).